The sequence spans 401 residues: Acetate kinase (401 aa).

Residue Asn10 participates in Mg(2+) binding. Lys17 contacts ATP. Position 91 (Arg91) interacts with substrate. Asp150 functions as the Proton donor/acceptor in the catalytic mechanism. ATP-binding positions include 210–214 (HLGNG), 285–287 (DCR), and 333–337 (GIGEN). Mg(2+) is bound at residue Glu387.

The protein belongs to the acetokinase family. In terms of assembly, homodimer. The cofactor is Mg(2+). Mn(2+) serves as cofactor.

Its subcellular location is the cytoplasm. The enzyme catalyses acetate + ATP = acetyl phosphate + ADP. It functions in the pathway metabolic intermediate biosynthesis; acetyl-CoA biosynthesis; acetyl-CoA from acetate: step 1/2. Functionally, catalyzes the formation of acetyl phosphate from acetate and ATP. Can also catalyze the reverse reaction. This is Acetate kinase from Pasteurella multocida (strain Pm70).